The primary structure comprises 251 residues: Developmental protein SEPALLATA 1 (251 aa).

In terms of domain architecture, MADS-box spans Arg3–Phe57. Positions Ala85 to Ile176 form a coiled coil. One can recognise a K-box domain in the interval Leu88–Val178.

As to quaternary structure, heterodimer with AGAMOUS capable of binding to CArG-box sequences. Interacts with AGL16. Interacts with TT16/AGL32. Expressed mainly in carpels, and weakly in stamens.

The protein resides in the nucleus. In terms of biological role, probable transcription factor. Functions with SEPALLATA2/AGL4 and SEPALLATA3/AGL9 to ensure proper development of petals, stamens and carpels, and to prevent the indeterminate growth of the flower meristem. Forms a heterodimer via the K-box domain with AGAMOUS, that could be involved in genes regulation during floral meristem development. The sequence is that of Developmental protein SEPALLATA 1 (SEP1) from Arabidopsis thaliana (Mouse-ear cress).